A 188-amino-acid chain; its full sequence is Phosphatidylinositol N-acetylglucosaminyltransferase subunit H (188 aa).

The protein belongs to the PIGH family. In terms of assembly, component of the glycosylphosphatidylinositol-N-acetylglucosaminyltransferase (GPI-GnT) complex composed at least by PIGA, PIGC, PIGH, PIGP, PIGQ, PIGY and DPM2. Interacts with PIGQ.

It is found in the cytoplasm. Its pathway is glycolipid biosynthesis; glycosylphosphatidylinositol-anchor biosynthesis. In terms of biological role, part of the glycosylphosphatidylinositol-N-acetylglucosaminyltransferase (GPI-GnT) complex that catalyzes the transfer of N-acetylglucosamine from UDP-N-acetylglucosamine to phosphatidylinositol and participates in the first step of GPI biosynthesis. This chain is Phosphatidylinositol N-acetylglucosaminyltransferase subunit H, found in Mus musculus (Mouse).